A 68-amino-acid chain; its full sequence is Large ribosomal subunit protein uL29 (68 aa).

Belongs to the universal ribosomal protein uL29 family.

This is Large ribosomal subunit protein uL29 from Rhodopseudomonas palustris (strain BisA53).